A 715-amino-acid chain; its full sequence is Fatty acid oxidation complex subunit alpha (715 aa).

Residues methionine 1 to alanine 190 are enoyl-CoA hydratase/isomerase. Aspartate 297 is a substrate binding site. A 3-hydroxyacyl-CoA dehydrogenase region spans residues histidine 312 to asparagine 715. Residues methionine 325, aspartate 344, valine 401–glutamate 403, lysine 408, and serine 430 contribute to the NAD(+) site. Histidine 451 functions as the For 3-hydroxyacyl-CoA dehydrogenase activity in the catalytic mechanism. Asparagine 454 is an NAD(+) binding site. Residues asparagine 501 and tyrosine 660 each contribute to the substrate site.

The protein in the N-terminal section; belongs to the enoyl-CoA hydratase/isomerase family. In the C-terminal section; belongs to the 3-hydroxyacyl-CoA dehydrogenase family. Heterotetramer of two alpha chains (FadB) and two beta chains (FadA).

It catalyses the reaction a (3S)-3-hydroxyacyl-CoA + NAD(+) = a 3-oxoacyl-CoA + NADH + H(+). It carries out the reaction a (3S)-3-hydroxyacyl-CoA = a (2E)-enoyl-CoA + H2O. The catalysed reaction is a 4-saturated-(3S)-3-hydroxyacyl-CoA = a (3E)-enoyl-CoA + H2O. The enzyme catalyses (3S)-3-hydroxybutanoyl-CoA = (3R)-3-hydroxybutanoyl-CoA. It catalyses the reaction a (3Z)-enoyl-CoA = a 4-saturated (2E)-enoyl-CoA. It carries out the reaction a (3E)-enoyl-CoA = a 4-saturated (2E)-enoyl-CoA. Its pathway is lipid metabolism; fatty acid beta-oxidation. Involved in the aerobic and anaerobic degradation of long-chain fatty acids via beta-oxidation cycle. Catalyzes the formation of 3-oxoacyl-CoA from enoyl-CoA via L-3-hydroxyacyl-CoA. It can also use D-3-hydroxyacyl-CoA and cis-3-enoyl-CoA as substrate. The chain is Fatty acid oxidation complex subunit alpha from Ectopseudomonas oleovorans (Pseudomonas oleovorans).